Here is a 223-residue protein sequence, read N- to C-terminus: Chalcone--flavanone isomerase 2 (223 aa).

Thr41, Asn106, and Ser183 together coordinate substrate.

It belongs to the chalcone isomerase family.

The enzyme catalyses a chalcone = a flavanone.. It functions in the pathway secondary metabolite biosynthesis; flavonoid biosynthesis. In terms of biological role, catalyzes the intramolecular cyclization of bicyclic chalcones into tricyclic (S)-flavanones. Responsible for the isomerization of 4,2',4',6'-tetrahydroxychalcone (also termed chalcone) into naringenin. The polypeptide is Chalcone--flavanone isomerase 2 (CHI2) (Arabidopsis thaliana (Mouse-ear cress)).